We begin with the raw amino-acid sequence, 149 residues long: Small ribosomal subunit protein uS11z (149 aa).

The interval 130-149 (VTPVPTDSTRRKGGRRGRRL) is disordered. A compositionally biased stretch (basic residues) spans 140–149 (RKGGRRGRRL).

The protein belongs to the universal ribosomal protein uS11 family.

In Zea mays (Maize), this protein is Small ribosomal subunit protein uS11z.